Reading from the N-terminus, the 385-residue chain is Multidrug resistance protein MdtE (385 aa).

Residues 1–20 form the signal peptide; that stretch reads MNRRRKLLIPLLFCGAMLTA. A lipid anchor (N-palmitoyl cysteine) is attached at Cys21. Residue Cys21 is the site of S-diacylglycerol cysteine attachment.

This sequence belongs to the membrane fusion protein (MFP) (TC 8.A.1) family. In terms of assembly, homotrimer. Part of the tripartite efflux system MdtEF-TolC, which is composed of an inner membrane transporter, MdtF, a membrane fusion protein, MdtE, and an outer membrane component, TolC. The complex forms a large protein conduit and can translocate molecules across both the inner and outer membranes.

It localises to the cell inner membrane. In terms of biological role, part of the tripartite efflux system MdtEF-TolC, which confers resistance to compounds such as rhodamine 6G, erythromycin, doxorubicin, ethidium bromide, TPP, SDS, deoxycholate, crystal violet and benzalkonium. In Escherichia coli (strain K12), this protein is Multidrug resistance protein MdtE (mdtE).